A 376-amino-acid chain; its full sequence is Polygalacturonase (376 aa).

Residues 1 to 20 (MASSLKLGLIALLGATAVNA) form the signal peptide. Cysteines 39 and 57 form a disulfide. The PbH1 1 repeat unit spans residues 170–208 (AKELTLSGITVDTADGDSNGGHNTDAFDVGSSNGVYITS). Aspartate 215 acts as the Proton donor in catalysis. Residues cysteine 217 and cysteine 233 are joined by a disulfide bond. PbH1 repeat units lie at residues 223 to 243 (GTNVHFTGAQCTGGHGISIGS), 252 to 273 (VDGVTVESCTIKDSDNGVRIKT), 281 to 303 (VQGVTYKDITLSGIAKYGIVIEQ), and 315 to 360 (TSGV…SITG). Residue histidine 237 is part of the active site. Cystine bridges form between cysteine 343–cysteine 348 and cysteine 367–cysteine 376.

It belongs to the glycosyl hydrolase 28 family.

It localises to the secreted. It carries out the reaction (1,4-alpha-D-galacturonosyl)n+m + H2O = (1,4-alpha-D-galacturonosyl)n + (1,4-alpha-D-galacturonosyl)m.. This Penicillium griseoroseum protein is Polygalacturonase (PGG1).